A 348-amino-acid chain; its full sequence is Probable dual-specificity RNA methyltransferase RlmN (348 aa).

Glutamate 93 (proton acceptor) is an active-site residue. The 235-residue stretch at 99–333 (TEKRLTACLS…VSFRKSRGLD (235 aa)) folds into the Radical SAM core domain. Cysteine 106 and cysteine 338 are joined by a disulfide. Cysteine 113, cysteine 117, and cysteine 120 together coordinate [4Fe-4S] cluster. S-adenosyl-L-methionine-binding positions include 160–161 (GE), serine 190, 219–221 (SLH), and asparagine 295. The S-methylcysteine intermediate role is filled by cysteine 338.

This sequence belongs to the radical SAM superfamily. RlmN family. The cofactor is [4Fe-4S] cluster.

The protein resides in the cytoplasm. The catalysed reaction is adenosine(2503) in 23S rRNA + 2 reduced [2Fe-2S]-[ferredoxin] + 2 S-adenosyl-L-methionine = 2-methyladenosine(2503) in 23S rRNA + 5'-deoxyadenosine + L-methionine + 2 oxidized [2Fe-2S]-[ferredoxin] + S-adenosyl-L-homocysteine. The enzyme catalyses adenosine(37) in tRNA + 2 reduced [2Fe-2S]-[ferredoxin] + 2 S-adenosyl-L-methionine = 2-methyladenosine(37) in tRNA + 5'-deoxyadenosine + L-methionine + 2 oxidized [2Fe-2S]-[ferredoxin] + S-adenosyl-L-homocysteine. In terms of biological role, specifically methylates position 2 of adenine 2503 in 23S rRNA and position 2 of adenine 37 in tRNAs. In Prochlorococcus marinus (strain MIT 9312), this protein is Probable dual-specificity RNA methyltransferase RlmN.